An 81-amino-acid chain; its full sequence is Cytochrome b559 subunit alpha (81 aa).

Residues 21-35 (VIHSVTIPSLFVGGW) traverse the membrane as a helical segment. Histidine 23 serves as a coordination point for heme.

The protein belongs to the PsbE/PsbF family. Heterodimer of an alpha subunit and a beta subunit. PSII is composed of 1 copy each of membrane proteins PsbA, PsbB, PsbC, PsbD, PsbE, PsbF, PsbH, PsbI, PsbJ, PsbK, PsbL, PsbM, PsbT, PsbY, PsbZ, Psb30/Ycf12, at least 3 peripheral proteins of the oxygen-evolving complex and a large number of cofactors. It forms dimeric complexes. The cofactor is heme b.

The protein localises to the plastid. It is found in the chloroplast thylakoid membrane. Functionally, this b-type cytochrome is tightly associated with the reaction center of photosystem II (PSII). PSII is a light-driven water:plastoquinone oxidoreductase that uses light energy to abstract electrons from H(2)O, generating O(2) and a proton gradient subsequently used for ATP formation. It consists of a core antenna complex that captures photons, and an electron transfer chain that converts photonic excitation into a charge separation. The polypeptide is Cytochrome b559 subunit alpha (Euglena gracilis).